Consider the following 148-residue polypeptide: Proline-rich nuclear receptor coactivator 2 (148 aa).

Positions 1 to 69 are disordered; that stretch reads MGGGERYNIP…WSPEARQAVS (69 aa). The short motif at 109 to 115 is the SH3-binding element; that stretch reads SEPPSPS.

This sequence belongs to the PNRC family. PNRC2 subfamily.

It localises to the nucleus. The protein resides in the cytoplasm. Its subcellular location is the P-body. In terms of biological role, involved in nonsense-mediated mRNA decay (NMD) by acting as a bridge between the mRNA decapping complex and the NMD machinery. May act by targeting the NMD machinery to the P-body and recruiting the decapping machinery to aberrant mRNAs. Required for upf1/rent1 localization to the P-body. Also acts as a nuclear receptor coactivator. This is Proline-rich nuclear receptor coactivator 2 (pnrc2) from Danio rerio (Zebrafish).